The primary structure comprises 234 residues: Proteasome subunit alpha type-2 (234 aa).

At Ala-2 the chain carries N-acetylalanine. Position 121 is a phosphotyrosine (Tyr-121).

Belongs to the peptidase T1A family. As to quaternary structure, the 26S proteasome consists of a 20S proteasome core and two 19S regulatory subunits. The 20S proteasome core is composed of 28 subunits that are arranged in four stacked rings, resulting in a barrel-shaped structure. The two end rings are each formed by seven alpha subunits, and the two central rings are each formed by seven beta subunits. The catalytic chamber with the active sites is on the inside of the barrel.

The protein localises to the cytoplasm. Its subcellular location is the nucleus. Its function is as follows. The proteasome is a multicatalytic proteinase complex which is characterized by its ability to cleave peptides with Arg, Phe, Tyr, Leu, and Glu adjacent to the leaving group at neutral or slightly basic pH. The proteasome has an ATP-dependent proteolytic activity. PSMA2 may have a potential regulatory effect on another component(s) of the proteasome complex through tyrosine phosphorylation. This chain is Proteasome subunit alpha type-2 (psma2), found in Carassius auratus (Goldfish).